The following is a 359-amino-acid chain: Protein mab-21-like 2 (359 aa).

The protein belongs to the mab-21 family.

The protein resides in the nucleus. It is found in the cytoplasm. Functionally, required for eye morphogenesis. May promote the survival of proliferating retinal progenitor cells. This chain is Protein mab-21-like 2 (mab21l2), found in Danio rerio (Zebrafish).